The chain runs to 413 residues: Serine/threonine-protein kinase ppk27 (413 aa).

The 302-residue stretch at 102 to 403 folds into the Protein kinase domain; the sequence is WSINTKITST…LKDFNKHGNF (302 aa). Residues 108 to 116 and K133 each bind ATP; that span reads ITSTEQREV. Residue D231 is the Proton acceptor of the active site.

The protein belongs to the protein kinase superfamily. Ser/Thr protein kinase family.

It is found in the cytoplasm. The enzyme catalyses L-seryl-[protein] + ATP = O-phospho-L-seryl-[protein] + ADP + H(+). It catalyses the reaction L-threonyl-[protein] + ATP = O-phospho-L-threonyl-[protein] + ADP + H(+). The chain is Serine/threonine-protein kinase ppk27 (ppk27) from Schizosaccharomyces pombe (strain 972 / ATCC 24843) (Fission yeast).